We begin with the raw amino-acid sequence, 232 residues long: Peroxiredoxin (232 aa).

A Thioredoxin domain is found at 6-161 (PSIGEKFPEI…ILRLIESLQI (156 aa)). Cys48 serves as the catalytic Cysteine sulfenic acid (-SOH) intermediate. Arg124 serves as a coordination point for substrate. Cys203 and Cys209 are joined by a disulfide.

The protein belongs to the peroxiredoxin family. Prx6 subfamily. As to quaternary structure, homodecamer. Pentamer of dimers that assemble into a ring structure.

It localises to the cytoplasm. The enzyme catalyses a hydroperoxide + [thioredoxin]-dithiol = an alcohol + [thioredoxin]-disulfide + H2O. Functionally, thiol-specific peroxidase that catalyzes the reduction of hydrogen peroxide and organic hydroperoxides to water and alcohols, respectively. Plays a role in cell protection against oxidative stress by detoxifying peroxides. This is Peroxiredoxin from Hyperthermus butylicus (strain DSM 5456 / JCM 9403 / PLM1-5).